Here is a 431-residue protein sequence, read N- to C-terminus: Adenylosuccinate synthetase (431 aa).

Residues 12 to 18 (GDEGKGK) and 40 to 42 (GHT) each bind GTP. Catalysis depends on Asp-13, which acts as the Proton acceptor. Asp-13 and Gly-40 together coordinate Mg(2+). Residues 13-16 (DEGK), 38-41 (NAGH), Thr-130, Arg-144, Gln-225, Thr-240, and Arg-304 each bind IMP. Catalysis depends on His-41, which acts as the Proton donor. 300–306 (ATTGRPR) is a binding site for substrate. Residues Arg-306, 332-334 (KLD), and 414-416 (SVG) each bind GTP.

This sequence belongs to the adenylosuccinate synthetase family. In terms of assembly, homodimer. Mg(2+) serves as cofactor.

The protein localises to the cytoplasm. It catalyses the reaction IMP + L-aspartate + GTP = N(6)-(1,2-dicarboxyethyl)-AMP + GDP + phosphate + 2 H(+). It functions in the pathway purine metabolism; AMP biosynthesis via de novo pathway; AMP from IMP: step 1/2. Plays an important role in the de novo pathway of purine nucleotide biosynthesis. Catalyzes the first committed step in the biosynthesis of AMP from IMP. This chain is Adenylosuccinate synthetase, found in Geotalea uraniireducens (strain Rf4) (Geobacter uraniireducens).